Here is a 787-residue protein sequence, read N- to C-terminus: Protein smoothened (787 aa).

Positions 1 to 27 (MAAARPARGPELPLLGLLLLLLLGDPG) are cleaved as a signal peptide. The Extracellular segment spans residues 28–233 (RGAASSGNAT…EAEHQDMHSY (206 aa)). Residues 30-60 (AASSGNATGPGPRSAGGSARRSAAVTGPPPP) are disordered. Asn35 is a glycosylation site (N-linked (GlcNAc...) asparagine). The span at 38-53 (GPGPRSAGGSARRSAA) shows a compositional bias: low complexity. Cystine bridges form between Cys64–Cys178, Cys70–Cys134, Cys78–Cys127, Cys118–Cys154, and Cys147–Cys169. In terms of domain architecture, FZ spans 65-181 (GRAAPCEPLR…DRFPEGCTNE (117 aa)). Asp95 is a cholesterol binding site. Asn188 carries N-linked (GlcNAc...) asparagine glycosylation. 2 disulfides stabilise this stretch: Cys193-Cys213 and Cys217-Cys295. A helical transmembrane segment spans residues 234–254 (IAAFGAVTGLCTLFTLATFVA). At 255–262 (DWRNSNRY) the chain is on the cytoplasmic side. The helical transmembrane segment at 263 to 283 (PAVILFYVNACFFVGSIGWLA) threads the bilayer. Residues 284–314 (QFMDGARREIVCRADGTMRLGEPTSNETLSC) are Extracellular-facing. Asn309 is a glycosylation site (N-linked (GlcNAc...) asparagine). Cys314 and Cys390 are oxidised to a cystine. A helical transmembrane segment spans residues 315–335 (VIIFVIVYYALMAGVVWFVVL). The Cytoplasmic segment spans residues 336–358 (TYAWHTSFKALGTTYQPLSGKTS). Residues 359-379 (YFHLLTWSLPFVLTVAILAVA) form a helical membrane-spanning segment. Residues 380-402 (QVDGDSVSGICFVGYKNYRYRAG) are Extracellular-facing. Position 394 (Tyr394) interacts with cholesterol. A helical transmembrane segment spans residues 403–423 (FVLAPIGLVLIVGGYFLIRGV). The Cytoplasmic segment spans residues 424–451 (MTLFSIKSNHPGLLSEKAASKINETMLR). A helical transmembrane segment spans residues 452–472 (LGIFGFLAFGFVLITFSCHFY). Over 473–524 (DFFNQAEWERSFRDYVLCQANVTIGLPTKQPIPDCEIKNRPSLLVEKINLFA) the chain is Extracellular. Cys490 and Cys507 form a disulfide bridge. The chain crosses the membrane as a helical span at residues 525–545 (MFGTGIAMSTWVWTKATLLIW). The tract at residues 538–569 (TKATLLIWRRTWCRLTGQSDDEPKRIKKSKMI) is interaction with BBS5 and BBS7. At 546–787 (RRTWCRLTGQ…TELMDADSDF (242 aa)) the chain is on the cytoplasmic side. 3 positions are modified to phosphoserine: Ser556, Ser574, and Ser590. The tract at residues 570 to 653 (AKAFSKRHEL…TPVPPEEQAN (84 aa)) is required for interaction with PRKACA. An interaction with DLG5 region spans residues 581–593 (QNPGQELSFSMHT). Thr593 carries the phosphothreonine modification. Phosphoserine is present on residues Ser595 and Ser638. Phosphothreonine is present on residues Thr640 and Thr644. The residue at position 662 (Ser662) is a Phosphoserine. The interval 667–704 (KRLGRKKKRRKRKKEVCPLAPPPELHPPAPAPSTIPRL) is disordered. Basic residues predominate over residues 668–680 (RLGRKKKRRKRKK). The span at 685-699 (LAPPPELHPPAPAPS) shows a compositional bias: pro residues.

It belongs to the G-protein coupled receptor Fz/Smo family. In terms of assembly, homodimer. Interacts (via C-terminus) with protein kinase A catalytic subunit PRKACA; interacts with free PRKACA subunits and the interaction leads to sequestration of PRKACA at the membrane, preventing PRKACA-mediated phosphorylation of GLI transcription factors. Interacts with ARRB2. Interacts with KIF7. Interacts with BBS5 and BBS7; the interactions are indicative for the association of SMO with the BBsome complex to facilitate ciliary localization of SMO. Interacts with DLG5 and SDCBP. Interacts with GAS8/DRC4. Post-translationally, phosphorylation by GRK kinases is required for interaction with protein kinase A catalytic subunit PRKACA.

It is found in the cell membrane. The protein localises to the cell projection. It localises to the cilium. Functionally, g protein-coupled receptor which associates with the patched protein (PTCH) to transduce hedgehog protein signaling. Binding of sonic hedgehog (SHH) to its receptor patched prevents inhibition of smoothened (SMO) by patched. When active, SMO binds to and sequesters protein kinase A catalytic subunit PRKACA at the cell membrane, preventing PRKACA-mediated phosphorylation of GLI transcription factors which releases the GLI proteins from PRKACA-mediated inhibition and allows for transcriptional activation of hedgehog pathway target genes. Required for the accumulation of KIF7, GLI2 and GLI3 in the cilia. Interacts with DLG5 at the ciliary base to induce the accumulation of KIF7 and GLI2 at the ciliary tip for GLI2 activation. In Homo sapiens (Human), this protein is Protein smoothened (SMO).